Consider the following 138-residue polypeptide: Vesicle transport protein GOT1B (138 aa).

Residue Met-1 is modified to N-acetylmethionine. At 1–9 (MISLTDTQK) the chain is on the cytoplasmic side. Residues 10–30 (IGMGLTGFGVFFLFFGMILFF) form a helical membrane-spanning segment. The Lumenal segment spans residues 31–32 (DK). The chain crosses the membrane as a helical span at residues 33–53 (ALLAIGNVLFVAGLAFVIGLE). Residues 54-68 (RTFRFFFQKHKMKAT) are Cytoplasmic-facing. The chain crosses the membrane as a helical span at residues 69–89 (GFFLGGVFVVLIGWPLIGMIF). A topological domain (lumenal) is located at residue Glu-90. The chain crosses the membrane as a helical span at residues 91 to 109 (IYGFFLLFRGFFPVVVGFI). At 110 to 138 (RRVPVLGSLLNLPGIRSFVDKVGESNNMV) the chain is on the cytoplasmic side.

It belongs to the GOT1 family.

It localises to the golgi apparatus membrane. May be involved in fusion of ER-derived transport vesicles with the Golgi complex. The polypeptide is Vesicle transport protein GOT1B (Bos taurus (Bovine)).